Reading from the N-terminus, the 468-residue chain is Adenosylhomocysteinase (468 aa).

Residues Thr57, Asp132, and Glu194 each contribute to the substrate site. NAD(+) is bound at residue 195 to 197; the sequence is TTT. Substrate contacts are provided by Lys224 and Asp228. NAD(+) is bound by residues Asn229, 258–263, Glu281, Asn316, 337–339, and Asn382; these read GFGDVG and IGH.

The protein belongs to the adenosylhomocysteinase family. NAD(+) is required as a cofactor.

It localises to the cytoplasm. It carries out the reaction S-adenosyl-L-homocysteine + H2O = L-homocysteine + adenosine. Its pathway is amino-acid biosynthesis; L-homocysteine biosynthesis; L-homocysteine from S-adenosyl-L-homocysteine: step 1/1. Its function is as follows. May play a key role in the regulation of the intracellular concentration of adenosylhomocysteine. The chain is Adenosylhomocysteinase from Methylorubrum extorquens (strain CM4 / NCIMB 13688) (Methylobacterium extorquens).